The following is a 61-amino-acid chain: UPF0391 membrane protein Pnap_0032 (61 aa).

Transmembrane regions (helical) follow at residues 5 to 25 and 33 to 53; these read AIIFAVISLIAGALGFSGVAA and VLFGLFLILAVIFIVLAALGV.

Belongs to the UPF0391 family.

The protein resides in the cell membrane. This chain is UPF0391 membrane protein Pnap_0032, found in Polaromonas naphthalenivorans (strain CJ2).